The sequence spans 334 residues: Trans-3-hydroxy-L-proline dehydratase (334 aa).

Cys-91 acts as the Proton acceptor in catalysis. Substrate contacts are provided by residues 92-93 (GH), Asp-250, and 255-256 (GT).

This sequence belongs to the proline racemase family.

It catalyses the reaction trans-3-hydroxy-L-proline = 1-pyrroline-2-carboxylate + H2O. Its function is as follows. Catalyzes the dehydration of trans-3-hydroxy-L-proline (t3LHyp) to Delta(1)-pyrroline-2-carboxylate (Pyr2C). Is likely involved in a degradation pathway that converts t3LHyp to L-proline. Can also catalyze the epimerization of trans-4-hydroxy-L-proline (t4LHyp) to cis-4-hydroxy-D-proline (c4DHyp) in vitro. Displays no proline racemase activity. The protein is Trans-3-hydroxy-L-proline dehydratase of Bacillus thuringiensis subsp. konkukian (strain 97-27).